The primary structure comprises 274 residues: Pre-rRNA-processing protein PNO1 (274 aa).

Positions 1–70 (MVAPTALKKA…GSRKTHESKT (70 aa)) are disordered. Acidic residues predominate over residues 33-48 (SIDEDDDDDVLLDDSD). Phosphoserine is present on serine 47. Threonine 51 bears the Phosphothreonine mark. Residues 51–69 (TAKEEVEGEEGSRKTHESK) are compositionally biased toward basic and acidic residues. The KH domain occupies 195-247 (GDHLSRAIGRIAGKDGKTKFAIENATRTRIVLADSKIHILGGFTHIRMARESV).

This sequence belongs to the PNO1 family. Component of the small ribosomal subunit, ribosomal RNA processing complex (SSU RRP complex). Interacts with NOB1.

It localises to the cytoplasm. It is found in the nucleus. The protein resides in the nucleolus. Functionally, required for small ribosomal subunit (SSU) synthesis. Has a role in the processing of early nucleolar and late cytoplasmic pre-RNA species. Recruits DIM1 to nucleolar pre-RNAs. Indirectly required for cleavage at the A2 site of the 20S pre-rRNA, forming 18S rRNA, and at A1 and A2 sites of other pre-rRNAs. The polypeptide is Pre-rRNA-processing protein PNO1 (PNO1) (Saccharomyces cerevisiae (strain ATCC 204508 / S288c) (Baker's yeast)).